We begin with the raw amino-acid sequence, 173 residues long: MTWRERAELRIGISGMPGVGKTTLVLKIAELARSRVKVCGFVTVEVREGGTRIGFDVVDLANGRRMALARVGRGEPSVGKYVVNLEACNVISEALRRECDLKIIDEIGAMEFKCKNFGEDLQTALHTSPRVIATVHRNYIDIAKKLGLEIIWLTRENWGLVFRQLLIQLGLTQ.

Residues 15–22 (GMPGVGKT) and 101–108 (LKIIDEIG) contribute to the ATP site.

This sequence belongs to the THEP1 NTPase family.

The enzyme catalyses a ribonucleoside 5'-triphosphate + H2O = a ribonucleoside 5'-diphosphate + phosphate + H(+). Functionally, has nucleotide phosphatase activity towards ATP, GTP, CTP, TTP and UTP. May hydrolyze nucleoside diphosphates with lower efficiency. The sequence is that of Nucleoside-triphosphatase THEP1 from Pyrobaculum aerophilum (strain ATCC 51768 / DSM 7523 / JCM 9630 / CIP 104966 / NBRC 100827 / IM2).